The sequence spans 349 residues: MDIKTALSRIVGHLDLSTEEMRSVMREIMTGQCTDAQIGAFMMAMRMKSESIDEIVGAVSAMRELADRVELKTLDGVVDVVGTGGDGANIFNVSTASSFVVAAAGCTVAKHGNRAVSGKSGSADLLEAAGIYLNLTPVQVARCIDNVGIGFMFAQSHHGAMKYAAGPRRDLGLRTLFNMLGPLTNPAGVKHQVVGVFTQALCRPLAEVLQRLGSKHVLVVHSQDGLDEFSLAAPTYVAELKNDQITEYWVQPEDLGMKSQSLFGLVVESPAASLELIRDALGRRKTEHGQKAAEMIVLNAGAALYAADHASSLKEGVALAHDALHTGLAREKLEELGAFTAVFKQENEG.

Residues Gly-82, 85–86, 92–95, 110–118, and Ser-122 each bind 5-phospho-alpha-D-ribose 1-diphosphate; these read GD, NVST, and KHGNRAVSG. Gly-82 is a binding site for anthranilate. Ser-94 lines the Mg(2+) pocket. Asn-113 is a binding site for anthranilate. Residue Arg-168 participates in anthranilate binding. Mg(2+) is bound by residues Asp-227 and Glu-228.

This sequence belongs to the anthranilate phosphoribosyltransferase family. Homodimer. The cofactor is Mg(2+).

It carries out the reaction N-(5-phospho-beta-D-ribosyl)anthranilate + diphosphate = 5-phospho-alpha-D-ribose 1-diphosphate + anthranilate. It participates in amino-acid biosynthesis; L-tryptophan biosynthesis; L-tryptophan from chorismate: step 2/5. Its function is as follows. Catalyzes the transfer of the phosphoribosyl group of 5-phosphorylribose-1-pyrophosphate (PRPP) to anthranilate to yield N-(5'-phosphoribosyl)-anthranilate (PRA). This chain is Anthranilate phosphoribosyltransferase, found in Pseudomonas fluorescens (strain ATCC BAA-477 / NRRL B-23932 / Pf-5).